A 717-amino-acid polypeptide reads, in one-letter code: DNA-directed RNA polymerase subunit beta' (717 aa).

Zn(2+) is bound by residues Cys-71, Cys-73, Cys-91, and Cys-94. Mg(2+) is bound by residues Asp-481, Asp-483, and Asp-485.

This sequence belongs to the RNA polymerase beta' chain family. RpoC1 subfamily. In terms of assembly, in plastids the minimal PEP RNA polymerase catalytic core is composed of four subunits: alpha, beta, beta', and beta''. When a (nuclear-encoded) sigma factor is associated with the core the holoenzyme is formed, which can initiate transcription. The cofactor is Mg(2+). Zn(2+) serves as cofactor.

Its subcellular location is the plastid. The protein resides in the chloroplast. It catalyses the reaction RNA(n) + a ribonucleoside 5'-triphosphate = RNA(n+1) + diphosphate. DNA-dependent RNA polymerase catalyzes the transcription of DNA into RNA using the four ribonucleoside triphosphates as substrates. In Chlorokybus atmophyticus (Soil alga), this protein is DNA-directed RNA polymerase subunit beta'.